The primary structure comprises 391 residues: Elongation factor Tu (391 aa).

The region spanning Lys10 to Ala201 is the tr-type G domain. The G1 stretch occupies residues Gly19–Thr26. GTP is bound at residue Gly19–Thr26. Residue Thr26 participates in Mg(2+) binding. The segment at Gly55–Ser59 is G2. The tract at residues Asp76–Gly79 is G3. GTP is bound by residues Asp76–His80 and Asn131–Asp134. A G4 region spans residues Asn131 to Asp134. A G5 region spans residues Ser169–Leu171.

It belongs to the TRAFAC class translation factor GTPase superfamily. Classic translation factor GTPase family. EF-Tu/EF-1A subfamily. As to quaternary structure, monomer.

It localises to the cytoplasm. The catalysed reaction is GTP + H2O = GDP + phosphate + H(+). GTP hydrolase that promotes the GTP-dependent binding of aminoacyl-tRNA to the A-site of ribosomes during protein biosynthesis. The sequence is that of Elongation factor Tu from Ruegeria pomeroyi (strain ATCC 700808 / DSM 15171 / DSS-3) (Silicibacter pomeroyi).